The chain runs to 236 residues: MAKRSKAYRAAAEKIEAGKFYAPAEAVALAKELAEGSKSDPTVEVAMRLGVDPRKADQMVRGTVNLPNGTGKTARVVVFATGDKAAAAEAAGADFVGNDDLIARIQGGWTDFDAAVATPDMMGKVGRLGKILGPRNLMPNPKTGTVTMDVAKAVNDIKGGKIDFRVDKHSNLHFIIGKASFDAQKLAENYGAALEEVLRLKPSASKGRYITKATVATTFGPGIPVDPNATEVTTQA.

The protein belongs to the universal ribosomal protein uL1 family. In terms of assembly, part of the 50S ribosomal subunit.

Functionally, binds directly to 23S rRNA. The L1 stalk is quite mobile in the ribosome, and is involved in E site tRNA release. Protein L1 is also a translational repressor protein, it controls the translation of the L11 operon by binding to its mRNA. The chain is Large ribosomal subunit protein uL1 from Kocuria rhizophila (strain ATCC 9341 / DSM 348 / NBRC 103217 / DC2201).